We begin with the raw amino-acid sequence, 362 residues long: Alternative oxidase, mitochondrial (362 aa).

The N-terminal 64 residues, 1 to 64, are a transit peptide targeting the mitochondrion; it reads MNTPKVNILY…RGFTTTSVVR (64 aa). Residues 156–176 form a helical membrane-spanning segment; sequence LVRFIFLESIAGVPGMVAGML. Residues Glu-163, Glu-202, and His-205 each coordinate Fe cation. A helical membrane pass occupies residues 222–242; sequence LILGAQGVFFNAMFLSYLVSP. Residues Glu-253, Glu-310, and His-313 each contribute to the Fe cation site.

Belongs to the alternative oxidase family. Fe cation serves as cofactor.

The protein localises to the mitochondrion inner membrane. In terms of biological role, catalyzes cyanide-resistant oxygen consumption. May increase respiration when the cytochrome respiratory pathway is restricted, or in response to low temperatures. The chain is Alternative oxidase, mitochondrial (aod-1) from Gelasinospora sp. (strain S23).